Reading from the N-terminus, the 338-residue chain is Nicotinate-nucleotide--dimethylbenzimidazole phosphoribosyltransferase (338 aa).

The active-site Proton acceptor is the Glu305.

It belongs to the CobT family.

The catalysed reaction is 5,6-dimethylbenzimidazole + nicotinate beta-D-ribonucleotide = alpha-ribazole 5'-phosphate + nicotinate + H(+). Its pathway is nucleoside biosynthesis; alpha-ribazole biosynthesis; alpha-ribazole from 5,6-dimethylbenzimidazole: step 1/2. Catalyzes the synthesis of alpha-ribazole-5'-phosphate from nicotinate mononucleotide (NAMN) and 5,6-dimethylbenzimidazole (DMB). The chain is Nicotinate-nucleotide--dimethylbenzimidazole phosphoribosyltransferase from Rhizobium etli (strain CIAT 652).